The following is a 551-amino-acid chain: UvrABC system protein C (551 aa).

The 76-residue stretch at 12–87 (EKPGVYIFKN…IFKHKPKYNI (76 aa)) folds into the GIY-YIG domain. In terms of domain architecture, UVR spans 193 to 228 (EFVKDYIEQKMNYHSKMLDFENAAKYRDLLLSFEKL).

It belongs to the UvrC family. In terms of assembly, interacts with UvrB in an incision complex.

It is found in the cytoplasm. The UvrABC repair system catalyzes the recognition and processing of DNA lesions. UvrC both incises the 5' and 3' sides of the lesion. The N-terminal half is responsible for the 3' incision and the C-terminal half is responsible for the 5' incision. This Thermosipho africanus (strain TCF52B) protein is UvrABC system protein C.